A 148-amino-acid polypeptide reads, in one-letter code: Lysozyme C, milk isozyme (148 aa).

The N-terminal stretch at 1–18 (MKALLIVGLLLLSVAVQG) is a signal peptide. Positions 19-148 (KKFQRCELAR…LRSYVQGCRV (130 aa)) constitute a C-type lysozyme domain. 4 disulfide bridges follow: Cys-24–Cys-146, Cys-48–Cys-134, Cys-83–Cys-99, and Cys-95–Cys-113. Residues Glu-53 and Asp-71 contribute to the active site.

This sequence belongs to the glycosyl hydrolase 22 family.

The enzyme catalyses Hydrolysis of (1-&gt;4)-beta-linkages between N-acetylmuramic acid and N-acetyl-D-glucosamine residues in a peptidoglycan and between N-acetyl-D-glucosamine residues in chitodextrins.. Its function is as follows. Lysozymes have primarily a bacteriolytic function; those in tissues and body fluids are associated with the monocyte-macrophage system and enhance the activity of immunoagents. This Bos taurus (Bovine) protein is Lysozyme C, milk isozyme.